The primary structure comprises 190 residues: MEHESKTKMDGIEMEKGKKENGSRKGVEITMRVLALVLTMVAATVLGVAKQTEVVPIKLIPTLPPLNVATTAKASYLSAFVYNICANAIACGYTAISIMIVIISKGRRSKCLLMAVLIGDLMMVALLCSSTGAAGAIGLMGRHGNKHVMWKKVCGVFGKFCNQAAVSVAITLIASVVFMLLVVLDALKLP.

The segment at 1–21 is disordered; it reads MEHESKTKMDGIEMEKGKKEN. At 1–28 the chain is on the cytoplasmic side; the sequence is MEHESKTKMDGIEMEKGKKENGSRKGVE. The helical transmembrane segment at 29-49 threads the bilayer; that stretch reads ITMRVLALVLTMVAATVLGVA. The Extracellular segment spans residues 50 to 83; it reads KQTEVVPIKLIPTLPPLNVATTAKASYLSAFVYN. Residues 84 to 104 form a helical membrane-spanning segment; it reads ICANAIACGYTAISIMIVIIS. The Cytoplasmic portion of the chain corresponds to 105-111; it reads KGRRSKC. A helical membrane pass occupies residues 112–132; sequence LLMAVLIGDLMMVALLCSSTG. Topologically, residues 133 to 163 are extracellular; it reads AAGAIGLMGRHGNKHVMWKKVCGVFGKFCNQ. Residues 164 to 184 traverse the membrane as a helical segment; sequence AAVSVAITLIASVVFMLLVVL. Topologically, residues 185–190 are cytoplasmic; it reads DALKLP.

It belongs to the Casparian strip membrane proteins (CASP) family. As to quaternary structure, homodimer and heterodimers.

Its subcellular location is the cell membrane. The sequence is that of CASP-like protein 1E1 from Arabidopsis lyrata subsp. lyrata (Lyre-leaved rock-cress).